The chain runs to 393 residues: NAD(P)H-quinone oxidoreductase subunit H, chloroplastic (393 aa).

It belongs to the complex I 49 kDa subunit family. NDH is composed of at least 16 different subunits, 5 of which are encoded in the nucleus.

The protein localises to the plastid. Its subcellular location is the chloroplast thylakoid membrane. It catalyses the reaction a plastoquinone + NADH + (n+1) H(+)(in) = a plastoquinol + NAD(+) + n H(+)(out). The catalysed reaction is a plastoquinone + NADPH + (n+1) H(+)(in) = a plastoquinol + NADP(+) + n H(+)(out). NDH shuttles electrons from NAD(P)H:plastoquinone, via FMN and iron-sulfur (Fe-S) centers, to quinones in the photosynthetic chain and possibly in a chloroplast respiratory chain. The immediate electron acceptor for the enzyme in this species is believed to be plastoquinone. Couples the redox reaction to proton translocation, and thus conserves the redox energy in a proton gradient. The polypeptide is NAD(P)H-quinone oxidoreductase subunit H, chloroplastic (Phaseolus vulgaris (Kidney bean)).